The chain runs to 345 residues: 3-hydroxy-5-methyl-1-naphthoate 3-O-methyltransferase (345 aa).

Asp-205 lines the S-adenosyl-L-methionine pocket. Residue His-252 is the Proton acceptor of the active site.

The protein belongs to the class I-like SAM-binding methyltransferase superfamily. Cation-independent O-methyltransferase family.

The enzyme catalyses 3-hydroxy-5-methyl-1-naphthoate + S-adenosyl-L-methionine = 3-methoxy-5-methyl-1-naphthoate + S-adenosyl-L-homocysteine + H(+). Its pathway is antibiotic biosynthesis. Its activity is regulated as follows. Inhibited by different divalent cations, such as Mg(2+), Mn(2+), Fe(2+), Cu(2+) and Zn(2+). O-methyltransferase that mediates the formation of 3-methoxy-5-methyl-1-naphthoate from 3-hydroxy-5-methyl-1-naphthoate in the biosynthesis of the antitumor antibiotic azinomycin B. This Streptomyces sahachiroi protein is 3-hydroxy-5-methyl-1-naphthoate 3-O-methyltransferase.